The primary structure comprises 295 residues: Small ribosomal subunit protein uS3 (295 aa).

Residues 39 to 107 (VREYLKKKLK…PVAVNIEEVR (69 aa)) form the KH type-2 domain. The disordered stretch occupies residues 213-295 (GTGAKMIEVA…AAAADGAKTE (83 aa)). Positions 224–245 (EERKPRGPRRDARPGDRPDRGA) are enriched in basic and acidic residues. Low complexity-rich tracts occupy residues 246 to 255 (PRGAPRAPRG) and 283 to 295 (AAPA…AKTE).

It belongs to the universal ribosomal protein uS3 family. In terms of assembly, part of the 30S ribosomal subunit. Forms a tight complex with proteins S10 and S14.

Functionally, binds the lower part of the 30S subunit head. Binds mRNA in the 70S ribosome, positioning it for translation. This Polaromonas naphthalenivorans (strain CJ2) protein is Small ribosomal subunit protein uS3.